The chain runs to 228 residues: Sec-independent protein translocase protein TatB (228 aa).

Residues 1-21 (MFDFGLGELIFVGIIALIVLG) traverse the membrane as a helical segment. Disordered stretches follow at residues 106–164 (TPAD…TDKD) and 196–228 (VPHT…VRKS). Residues 135 to 151 (PSERSDTSAETLGDDRQ) are compositionally biased toward basic and acidic residues. Positions 206–228 (AINRKRDFRPKHRAKPKLRVRKS) are enriched in basic residues.

The protein belongs to the TatB family. In terms of assembly, the Tat system comprises two distinct complexes: a TatABC complex, containing multiple copies of TatA, TatB and TatC subunits, and a separate TatA complex, containing only TatA subunits. Substrates initially bind to the TatABC complex, which probably triggers association of the separate TatA complex to form the active translocon.

Its subcellular location is the cell inner membrane. Its function is as follows. Part of the twin-arginine translocation (Tat) system that transports large folded proteins containing a characteristic twin-arginine motif in their signal peptide across membranes. Together with TatC, TatB is part of a receptor directly interacting with Tat signal peptides. TatB may form an oligomeric binding site that transiently accommodates folded Tat precursor proteins before their translocation. This Neisseria gonorrhoeae (strain ATCC 700825 / FA 1090) protein is Sec-independent protein translocase protein TatB.